Reading from the N-terminus, the 186-residue chain is Small ribosomal subunit protein uS7 (186 aa).

This sequence belongs to the universal ribosomal protein uS7 family. As to quaternary structure, part of the 30S ribosomal subunit.

Its function is as follows. One of the primary rRNA binding proteins, it binds directly to 16S rRNA where it nucleates assembly of the head domain of the 30S subunit. Is located at the subunit interface close to the decoding center. In Methanothermobacter thermautotrophicus (strain ATCC 29096 / DSM 1053 / JCM 10044 / NBRC 100330 / Delta H) (Methanobacterium thermoautotrophicum), this protein is Small ribosomal subunit protein uS7.